Here is a 284-residue protein sequence, read N- to C-terminus: L-ribulose-5-phosphate 3-epimerase UlaE (284 aa).

The protein belongs to the L-ribulose-5-phosphate 3-epimerase family.

The enzyme catalyses L-ribulose 5-phosphate = L-xylulose 5-phosphate. It functions in the pathway cofactor degradation; L-ascorbate degradation; D-xylulose 5-phosphate from L-ascorbate: step 3/4. In terms of biological role, catalyzes the isomerization of L-xylulose-5-phosphate to L-ribulose-5-phosphate. Is involved in the anaerobic L-ascorbate utilization. This chain is L-ribulose-5-phosphate 3-epimerase UlaE, found in Shigella sonnei (strain Ss046).